Consider the following 701-residue polypeptide: Elongation factor G (701 aa).

The tr-type G domain maps to 10–290 (AKVRNIGIMA…AVVDYLPSPL (281 aa)). GTP contacts are provided by residues 19–26 (AHIDAGKT), 83–87 (DTPGH), and 137–140 (NKMD).

Belongs to the TRAFAC class translation factor GTPase superfamily. Classic translation factor GTPase family. EF-G/EF-2 subfamily.

The protein localises to the cytoplasm. Catalyzes the GTP-dependent ribosomal translocation step during translation elongation. During this step, the ribosome changes from the pre-translocational (PRE) to the post-translocational (POST) state as the newly formed A-site-bound peptidyl-tRNA and P-site-bound deacylated tRNA move to the P and E sites, respectively. Catalyzes the coordinated movement of the two tRNA molecules, the mRNA and conformational changes in the ribosome. The polypeptide is Elongation factor G (Tropheryma whipplei (strain TW08/27) (Whipple's bacillus)).